The sequence spans 122 residues: MAWLYVGCGGIAGTLARFLLSRWLGNRVRGTWPLGTLFVNLSGAFLLGLLLALPQGRLPANVTLALGTGFVGAYTTFSTFTYETVTMIGDGEGKRALAYSLGSILGGLLLAWLGWLAAGSLF.

4 consecutive transmembrane segments (helical) span residues 1–21 (MAWL…FLLS), 33–53 (PLGT…LLAL), 62–82 (VTLA…TFTY), and 102–122 (GSIL…GSLF). 2 residues coordinate Na(+): Gly72 and Thr75.

It belongs to the fluoride channel Fluc/FEX (TC 1.A.43) family.

It localises to the cell membrane. The enzyme catalyses fluoride(in) = fluoride(out). Its activity is regulated as follows. Na(+) is not transported, but it plays an essential structural role and its presence is essential for fluoride channel function. In terms of biological role, fluoride-specific ion channel. Important for reducing fluoride concentration in the cell, thus reducing its toxicity. This chain is Fluoride-specific ion channel FluC 2, found in Moorella thermoacetica (strain ATCC 39073 / JCM 9320).